A 57-amino-acid polypeptide reads, in one-letter code: MKISFVLLLTLFICSIGWSEARPTDIKCSESYQCFPVCKSRFGKTNGRCVNGFCDCF.

The N-terminal stretch at 1–21 (MKISFVLLLTLFICSIGWSEA) is a signal peptide. Cystine bridges form between Cys-28/Cys-49, Cys-34/Cys-54, and Cys-38/Cys-56.

This sequence belongs to the short scorpion toxin superfamily. Potassium channel inhibitor family. Gamma-KTx 2 subfamily. Expressed by the venom gland.

It is found in the secreted. Its function is as follows. Blocks human and/or rat Kv11.1/KCNH2/ERG1, Kv11.2/KCNH6/ERG2 and Kv11.3/KCNH7/ERG3 by binding to channel outer vestibule (S5P domain) with a 1:1 stoichiometry. Inhibition data are the following: hERG1 (reversible, Kd=7.7 nM, IC(50)=3.3 nM, IC(50)=11.9 nM), rERG1 (reversible, Kd=19 nM), hERG2 (reversible, Kd=77 nM), rERG2 (irreversible, Kd=4.2 nM), hERG3 (reversible, Kd=11.5 nM) and rERG3 (reversible, Kd=747 nM) potassium channels. Also has a minimal effect on rat ELK1/KCNH4 potassium channels (9% inhibition at 100 nM). Both this toxin and CnErgTx1 (AC Q86QT3) share mechanism of action and have overlapping binding sites on ERG1. The potency of these two toxins is not affected by elevating potassium ion concentration from 2 to 98 mM. In addition, at high toxin concentrations, block of ERG1 macroscopic currents by these two toxins is incomplete (88%). The blockade by this toxin is preferentially closed channel state-dependent, with a component of open, but not inactive state-dependent blockade. This toxin produces a concentration-dependent prolongation of QTc in the isolated rabbit heart (16.3% at 100 nM). The sequence is that of Potassium channel toxin gamma-KTx 2.1 from Mesobuthus eupeus (Lesser Asian scorpion).